A 1050-amino-acid polypeptide reads, in one-letter code: DNA ligase 4 (1050 aa).

The interval 1–22 (MNTNRRSRSPDEEALEEDQHQY) is disordered. Residues Glu329, Lys331, Leu332, Arg336, Glu398, Phe438, Glu498, Lys503, Lys520, and Lys522 each coordinate ATP. The active-site N6-AMP-lysine intermediate is Lys331. Glu398 is a Mg(2+) binding site. Glu498 provides a ligand contact to Mg(2+). Over residues 691–702 (QEQERKKMEMEN) the composition is skewed to basic and acidic residues. Positions 691–711 (QEQERKKMEMENRKRKPATKR) are disordered. 2 BRCT domains span residues 742–840 (ASKR…KENK) and 936–1049 (LRSF…EYVA).

It belongs to the ATP-dependent DNA ligase family. Mg(2+) is required as a cofactor.

It localises to the nucleus. The enzyme catalyses ATP + (deoxyribonucleotide)n-3'-hydroxyl + 5'-phospho-(deoxyribonucleotide)m = (deoxyribonucleotide)n+m + AMP + diphosphate.. Its function is as follows. DNA ligase involved in DNA non-homologous end joining (NHEJ); required for double-strand break (DSB) repair. The sequence is that of DNA ligase 4 (mus-53) from Neurospora crassa (strain ATCC 24698 / 74-OR23-1A / CBS 708.71 / DSM 1257 / FGSC 987).